A 260-amino-acid polypeptide reads, in one-letter code: Serine hydroxymethyltransferase (260 aa).

Position 60 is an N6-(pyridoxal phosphate)lysine (Lys60).

This sequence belongs to the SHMT family. As to quaternary structure, homodimer. Pyridoxal 5'-phosphate is required as a cofactor.

Its subcellular location is the cytoplasm. The enzyme catalyses (6R)-5,10-methylene-5,6,7,8-tetrahydrofolate + glycine + H2O = (6S)-5,6,7,8-tetrahydrofolate + L-serine. The protein operates within one-carbon metabolism; tetrahydrofolate interconversion. It participates in amino-acid biosynthesis; glycine biosynthesis; glycine from L-serine: step 1/1. In terms of biological role, catalyzes the reversible interconversion of serine and glycine with tetrahydrofolate (THF) serving as the one-carbon carrier. This reaction serves as the major source of one-carbon groups required for the biosynthesis of purines, thymidylate, methionine, and other important biomolecules. Also exhibits THF-independent aldolase activity toward beta-hydroxyamino acids, producing glycine and aldehydes, via a retro-aldol mechanism. This Corynebacterium sp. (strain P-1) protein is Serine hydroxymethyltransferase.